The primary structure comprises 386 residues: DNase toxin Tse7 (386 aa).

Interacts with Tsi7.

The catalysed reaction is Endonucleolytic cleavage to 5'-phosphodinucleotide and 5'-phosphooligonucleotide end-products.. In terms of biological role, type VI secretion exported toxin that via to its DNase activity induces growth arrest and ultimately DNA degradation within target cell. The activity is initially neutralized by a cognate immunity protein Tsi7. The protein is DNase toxin Tse7 of Pseudomonas aeruginosa (strain ATCC 15692 / DSM 22644 / CIP 104116 / JCM 14847 / LMG 12228 / 1C / PRS 101 / PAO1).